We begin with the raw amino-acid sequence, 395 residues long: Levanbiose-producing levanase (395 aa).

D1 is a catalytic residue. Residues 59–60, 124–125, E173, and W261 contribute to the substrate site; these read WT and RD.

Belongs to the glycosyl hydrolase 32 family.

Its subcellular location is the membrane. It catalyses the reaction Hydrolysis of (2-&gt;6)-beta-D-fructofuranan, to remove successive disaccharide residues as levanbiose, i.e. 6-(beta-D-fructofuranosyl)-D-fructose, from the end of the chain.. Catalyzes the degradation of levan mainly into levanbiose (difructose). Can also hydrolyze inulin. The polypeptide is Levanbiose-producing levanase (levB) (Geobacillus stearothermophilus (Bacillus stearothermophilus)).